Consider the following 373-residue polypeptide: Quinolinate synthase (373 aa).

2 residues coordinate iminosuccinate: H46 and S63. C109 is a binding site for [4Fe-4S] cluster. Iminosuccinate is bound by residues 142–144 (YMN) and S163. Residue C232 participates in [4Fe-4S] cluster binding. Iminosuccinate contacts are provided by residues 258-260 (HPE) and T275. C324 contacts [4Fe-4S] cluster.

This sequence belongs to the quinolinate synthase family. Type 3 subfamily. The cofactor is [4Fe-4S] cluster.

The protein resides in the cytoplasm. The catalysed reaction is iminosuccinate + dihydroxyacetone phosphate = quinolinate + phosphate + 2 H2O + H(+). It functions in the pathway cofactor biosynthesis; NAD(+) biosynthesis; quinolinate from iminoaspartate: step 1/1. Catalyzes the condensation of iminoaspartate with dihydroxyacetone phosphate to form quinolinate. This chain is Quinolinate synthase, found in Acidobacterium capsulatum (strain ATCC 51196 / DSM 11244 / BCRC 80197 / JCM 7670 / NBRC 15755 / NCIMB 13165 / 161).